A 193-amino-acid chain; its full sequence is Ion-translocating oxidoreductase complex subunit A (193 aa).

A run of 6 helical transmembrane segments spans residues 4 to 24 (FLLV…KFLG), 39 to 59 (IGMG…CWLV), 71 to 91 (FLRI…IETV), 102 to 122 (ALGI…LPLM), 134 to 154 (TLSG…FAGM), and 171 to 191 (PIAF…AGLV).

The protein belongs to the NqrDE/RnfAE family. As to quaternary structure, the complex is composed of six subunits: RnfA, RnfB, RnfC, RnfD, RnfE and RnfG.

The protein localises to the cellular chromatophore membrane. Part of a membrane-bound complex that couples electron transfer with translocation of ions across the membrane. Required for nitrogen fixation. Involved in electron transfer to nitrogenase. The chain is Ion-translocating oxidoreductase complex subunit A from Rhodobacter capsulatus (Rhodopseudomonas capsulata).